The following is a 266-amino-acid chain: Signal peptidase I (266 aa).

The Cytoplasmic segment spans residues 1–20; sequence MQTDNTKSNTNKTAKQEWGS. Residues 21-41 form a helical membrane-spanning segment; sequence FAFVICIALLIRILIMEPFTV. The Periplasmic portion of the chain corresponds to 42 to 266; it reads PTGSMKATIL…IFRNLYNTDA (225 aa). Catalysis depends on residues S45 and K108.

This sequence belongs to the peptidase S26 family.

The protein localises to the cell inner membrane. The enzyme catalyses Cleavage of hydrophobic, N-terminal signal or leader sequences from secreted and periplasmic proteins.. In terms of biological role, complements E.coli mutants temperature-sensitive for LepB function. In Rickettsia rickettsii (strain Sheila Smith), this protein is Signal peptidase I (lepB).